Here is a 372-residue protein sequence, read N- to C-terminus: 7-methylxanthosine synthase 1 (372 aa).

Residue Y18 participates in S-adenosyl-L-homocysteine binding. Residues N21 and N25 each coordinate xanthosine. 7 residues coordinate S-adenosyl-L-homocysteine: C62, N67, D101, L102, S140, F141, and C157. Y158 serves as a coordination point for xanthosine. C159 is an S-adenosyl-L-homocysteine binding site. Residues Q161 and W162 each coordinate xanthosine. The Mg(2+) site is built by N179, D261, F263, and N264. Residues S316, Y321, and Y356 each coordinate xanthosine.

It belongs to the methyltransferase superfamily. Type-7 methyltransferase family. Mg(2+) serves as cofactor. As to expression, expressed in stems, young leaves, floral buds, developing endosperm and immature fruits (grains). Detected in roots and old leaves, but not in mature fruits.

It catalyses the reaction xanthosine + S-adenosyl-L-methionine = 7-methylxanthosine + S-adenosyl-L-homocysteine. The protein operates within alkaloid biosynthesis. In terms of biological role, involved in the biosynthesis of caffeine. Specific for xanthosine and could not use xanthosine 5'-monophosphate (XMP) as substrate. Catalyzes the 7-N-methylation activity of xanthosine, but does not have 1-N- or 3-N-methylation activity. The protein is 7-methylxanthosine synthase 1 of Coffea arabica (Arabian coffee).